Here is a 226-residue protein sequence, read N- to C-terminus: Apoptosis regulator OPG045 (226 aa).

It belongs to the orthopoxvirus OPG045 family. In terms of assembly, homodimer. Interacts with host pro-apoptotic protein BCL2L11 (via BH3 domain). Interacts with host NLRP1. Interacts with host BAK.

Its subcellular location is the host mitochondrion outer membrane. It localises to the host cytoplasm. Plays a role in evading host innate immune response by inhibiting host inflammasome activation. Interacts with and inhibits NLR-mediated interleukin-1 beta/IL1B production in infected cells. At the host mitochondria outer membrane, interacts with the BH3 domain of host BAK and prevents BAK from binding active BAX. In turn, host apoptosis is inhibited. This Vaccinia virus (strain Copenhagen) (VACV) protein is Apoptosis regulator OPG045 (OPG045).